We begin with the raw amino-acid sequence, 566 residues long: Protein RocB (566 aa).

In terms of biological role, involved in arginine degradative pathway. The sequence is that of Protein RocB (rocB) from Bacillus subtilis (strain 168).